Here is a 436-residue protein sequence, read N- to C-terminus: Alpha-galactosidase mel1 (436 aa).

A signal peptide spans 1 to 24 (MISISFLNCFFLVFLFLFFSDVHG). Cys-45 and Cys-77 form a disulfide bridge. An N-linked (GlcNAc...) asparagine glycan is attached at Asn-84. An intrachain disulfide couples Cys-126 to Cys-156. Asp-154 serves as the catalytic Nucleophile. A glycan (N-linked (GlcNAc...) asparagine) is linked at Asn-180. Asp-214 serves as the catalytic Proton donor.

It belongs to the glycosyl hydrolase 27 family.

Its subcellular location is the endoplasmic reticulum lumen. The protein resides in the secreted. The enzyme catalyses Hydrolysis of terminal, non-reducing alpha-D-galactose residues in alpha-D-galactosides, including galactose oligosaccharides, galactomannans and galactolipids.. Secreted alpha-galactosidase required for catabolic conversion of melibiose to glucose and galactose. The polypeptide is Alpha-galactosidase mel1 (mel1) (Schizosaccharomyces pombe (strain 972 / ATCC 24843) (Fission yeast)).